The following is a 442-amino-acid chain: Small RNA 2'-O-methyltransferase (442 aa).

Residues G125 and D151 each contribute to the S-adenosyl-L-methionine site. The Mg(2+) site is built by E209, E212, H213, and H260.

This sequence belongs to the methyltransferase superfamily. HEN1 family. Requires Mg(2+) as cofactor. Broadly expressed in the germline and somatic tissues in both hermaphrodites and males.

It is found in the cytoplasm. The protein resides in the nucleus. It localises to the nucleoplasm. Its subcellular location is the cytoplasmic granule. It carries out the reaction small RNA 3'-end nucleotide + S-adenosyl-L-methionine = small RNA 3'-end 2'-O-methylnucleotide + S-adenosyl-L-homocysteine + H(+). Its function is as follows. Methyltransferase that adds a 2'-O-methyl group at the 3'-end of PIWI-interacting RNAs (piRNAs) and small interfering RNAs (siRNAs) which are classes of regulatory RNAs that are involved in gene silencing in endogenous RNA interference (RNAi) pathways. Methylation protects the 3'-end of small RNAs from tailing and trimming and could constitute a recognition signal for appropriate argonaute machineries. Methylates and stabilizes 26G-siRNAs (a class of 26 nucleotide siRNAs that possess a monophosphorylated guanine residue at the 5'-end) when they are bound by argonaute protein ergo-1. This occurs in the female germline and embryo, but not in the male germline. Does not methylate 26G-siRNAs bound by argonaute proteins alg-3 or alg-4. Methylates and stabilizes 21U-piRNAs, which are a class of 21 nucleotide piRNAs that possess a uracil residue at the 5'-end, in the male and female germline. In addition, may play a role in exogenous RNAi (exoRNAi) pathways in the germline. This Caenorhabditis elegans protein is Small RNA 2'-O-methyltransferase.